We begin with the raw amino-acid sequence, 591 residues long: Aspartate--tRNA ligase (591 aa).

Glu-176 contributes to the L-aspartate binding site. Residues 200 to 203 (QILK) form an aspartate region. Arg-222 serves as a coordination point for L-aspartate. Residues 222–224 (RDE) and Gln-231 each bind ATP. His-450 serves as a coordination point for L-aspartate. Glu-484 provides a ligand contact to ATP. Arg-491 is a binding site for L-aspartate. 536 to 539 (GLDR) is a binding site for ATP.

This sequence belongs to the class-II aminoacyl-tRNA synthetase family. Type 1 subfamily. Homodimer.

Its subcellular location is the cytoplasm. The catalysed reaction is tRNA(Asp) + L-aspartate + ATP = L-aspartyl-tRNA(Asp) + AMP + diphosphate. Catalyzes the attachment of L-aspartate to tRNA(Asp) in a two-step reaction: L-aspartate is first activated by ATP to form Asp-AMP and then transferred to the acceptor end of tRNA(Asp). The sequence is that of Aspartate--tRNA ligase from Listeria welshimeri serovar 6b (strain ATCC 35897 / DSM 20650 / CCUG 15529 / CIP 8149 / NCTC 11857 / SLCC 5334 / V8).